Consider the following 357-residue polypeptide: tRNA N6-adenosine threonylcarbamoyltransferase (357 aa).

Fe cation is bound by residues His-116 and His-120. Residues 139–143, Asp-172, Gly-185, and Asn-284 each bind substrate; that span reads LVSGG. Asp-312 contributes to the Fe cation binding site.

Belongs to the KAE1 / TsaD family. The cofactor is Fe(2+).

It localises to the cytoplasm. The catalysed reaction is L-threonylcarbamoyladenylate + adenosine(37) in tRNA = N(6)-L-threonylcarbamoyladenosine(37) in tRNA + AMP + H(+). Its function is as follows. Required for the formation of a threonylcarbamoyl group on adenosine at position 37 (t(6)A37) in tRNAs that read codons beginning with adenine. Is involved in the transfer of the threonylcarbamoyl moiety of threonylcarbamoyl-AMP (TC-AMP) to the N6 group of A37, together with TsaE and TsaB. TsaD likely plays a direct catalytic role in this reaction. The sequence is that of tRNA N6-adenosine threonylcarbamoyltransferase from Synechococcus sp. (strain CC9605).